The primary structure comprises 1342 residues: DNA-directed RNA polymerase subunit beta (1342 aa).

Belongs to the RNA polymerase beta chain family. The RNAP catalytic core consists of 2 alpha, 1 beta, 1 beta' and 1 omega subunit. When a sigma factor is associated with the core the holoenzyme is formed, which can initiate transcription.

It carries out the reaction RNA(n) + a ribonucleoside 5'-triphosphate = RNA(n+1) + diphosphate. DNA-dependent RNA polymerase catalyzes the transcription of DNA into RNA using the four ribonucleoside triphosphates as substrates. The polypeptide is DNA-directed RNA polymerase subunit beta (Pseudoalteromonas atlantica (strain T6c / ATCC BAA-1087)).